Here is a 469-residue protein sequence, read N- to C-terminus: Asparagine--tRNA ligase (469 aa).

It belongs to the class-II aminoacyl-tRNA synthetase family. Homodimer.

Its subcellular location is the cytoplasm. It carries out the reaction tRNA(Asn) + L-asparagine + ATP = L-asparaginyl-tRNA(Asn) + AMP + diphosphate + H(+). This chain is Asparagine--tRNA ligase, found in Porphyromonas gingivalis (strain ATCC BAA-308 / W83).